We begin with the raw amino-acid sequence, 348 residues long: MKKTDELRTIRIDPLITPAELARQYAITSDIMDTVIATRQNIARIMTGQDARLLVVIGPCSVHDPIAAVEYAHRLYELRVKYKDRLEIIMRTYFEKPRTVVGWKGLISDPDLNGSFRVNHGLAVARKLLLDINALGMPAATEFLDIVIGQFIADLISWGAIGARTTESQIHREMASALSCPVGFKNGTDGNIRIAIDAIRAAKVRHLFFAPNKDGQMTINHTSGNPYGHIIMRGGRAPNYHPDDINSAVKHLREFDLLEHLMIDFSHGNCLKEHLRQKNVSKSVSYQISHGSKAIFGVMIESFLEEGFQTVTNNQPLIYGKSITDACLNWKDSVLIIEQLADAVDARF.

Belongs to the class-I DAHP synthase family.

It catalyses the reaction D-erythrose 4-phosphate + phosphoenolpyruvate + H2O = 7-phospho-2-dehydro-3-deoxy-D-arabino-heptonate + phosphate. It participates in metabolic intermediate biosynthesis; chorismate biosynthesis; chorismate from D-erythrose 4-phosphate and phosphoenolpyruvate: step 1/7. Its function is as follows. Stereospecific condensation of phosphoenolpyruvate (PEP) and D-erythrose-4-phosphate (E4P) giving rise to 3-deoxy-D-arabino-heptulosonate-7-phosphate (DAHP). The polypeptide is Phospho-2-dehydro-3-deoxyheptonate aldolase, Trp-sensitive (aroH) (Buchnera aphidicola subsp. Acyrthosiphon pisum (strain APS) (Acyrthosiphon pisum symbiotic bacterium)).